We begin with the raw amino-acid sequence, 113 residues long: Inner membrane protein YiaB (113 aa).

Topologically, residues 1-9 (MKTSKTVAK) are cytoplasmic. The chain crosses the membrane as a helical span at residues 10 to 20 (LLFVVGALVYL). Residues 21–33 (VGLWISCPLLSGK) lie on the Periplasmic side of the membrane. A helical membrane pass occupies residues 34-51 (GYFLGVLMTATFGNYAYL). Topologically, residues 52–61 (RAEKLGQLDD) are cytoplasmic. Residues 62-82 (FFTHICQLVALITIGLLFIGV) form a helical membrane-spanning segment. The Periplasmic segment spans residues 83-84 (LN). The helical transmembrane segment at 85-105 (APINTYEMVIYPIAFFVCLFG) threads the bilayer. Residues 106–113 (QMRLFRSA) are Cytoplasmic-facing.

It is found in the cell inner membrane. The sequence is that of Inner membrane protein YiaB (yiaB) from Escherichia coli (strain K12).